The chain runs to 94 residues: Large ribosomal subunit protein eL43A (94 aa).

Residues 39 to 62 form a C4-type zinc finger; sequence CPFCGRNTVKRTAAGIWCCNGKGC.

Belongs to the eukaryotic ribosomal protein eL43 family. In terms of assembly, component of the large ribosomal subunit (LSU). Mature yeast ribosomes consist of a small (40S) and a large (60S) subunit. The 40S small subunit contains 1 molecule of ribosomal RNA (18S rRNA) and at least 33 different proteins. The large 60S subunit contains 3 rRNA molecules (25S, 5.8S and 5S rRNA) and at least 46 different proteins.

Its subcellular location is the cytoplasm. Component of the ribosome, a large ribonucleoprotein complex responsible for the synthesis of proteins in the cell. The small ribosomal subunit (SSU) binds messenger RNAs (mRNAs) and translates the encoded message by selecting cognate aminoacyl-transfer RNA (tRNA) molecules. The large subunit (LSU) contains the ribosomal catalytic site termed the peptidyl transferase center (PTC), which catalyzes the formation of peptide bonds, thereby polymerizing the amino acids delivered by tRNAs into a polypeptide chain. The nascent polypeptides leave the ribosome through a tunnel in the LSU and interact with protein factors that function in enzymatic processing, targeting, and the membrane insertion of nascent chains at the exit of the ribosomal tunnel. The protein is Large ribosomal subunit protein eL43A (rpl4301) of Schizosaccharomyces pombe (strain 972 / ATCC 24843) (Fission yeast).